A 708-amino-acid polypeptide reads, in one-letter code: Metabotropic glutamate receptor-like protein L (708 aa).

The first 24 residues, 1–24 (MKLIIKNLILLLVSCLYFLSNVSC), serve as a signal peptide directing secretion. N-linked (GlcNAc...) asparagine glycosylation is found at Asn21, Asn235, Asn310, and Asn366. Residues 25–370 (DQEVHMALLL…TTGSINKTFM (346 aa)) lie on the Extracellular side of the membrane. The helical transmembrane segment at 371 to 391 (AVSILEMAICLIIGIIVIFFF) threads the bilayer. Topologically, residues 392 to 401 (SRNINIIYST) are cytoplasmic. The chain crosses the membrane as a helical span at residues 402–422 (IPYCLTILLGASLIAVAIFLW). At 423–435 (NLRDLNTQICTSK) the chain is on the extracellular side. Residues 436–456 (IWMASLGYNVLIGFIIIKSSL) form a helical membrane-spanning segment. The Cytoplasmic portion of the chain corresponds to 457–479 (IYFKFKEMVKSKNEKISPIPFGR). The helical transmembrane segment at 480-500 (IVLWFVPLLIIDCVLLIIYST) threads the bilayer. Residues 501-531 (SGNPGKIDSLGLDGIGRYEYTQNCVNNLTGD) are Extracellular-facing. Asn527 carries N-linked (GlcNAc...) asparagine glycosylation. A helical membrane pass occupies residues 532–552 (IILYIILVFHGLQLLYGCVIA). Residues 553–568 (WKTRVIDLEEFIEAHD) lie on the Cytoplasmic side of the membrane. The helical transmembrane segment at 569–589 (FATAIYLITFCSFIIVILMVG) threads the bilayer. Topologically, residues 590–597 (VTSTSNRN) are extracellular. The helical transmembrane segment at 598-618 (TIISACAIFSSFSCVLIIFGA) threads the bilayer. The Cytoplasmic portion of the chain corresponds to 619–708 (KFWKIYKPVE…SSRAAAQNDN (90 aa)). Positions 638–681 (KPQKSYSGSGGSGNSSGSKSKKTSAHSSTSGVKSGTSAPTQTSQ) are disordered. A compositionally biased stretch (polar residues) spans 669-681 (VKSGTSAPTQTSQ).

The protein in the N-terminal section; belongs to the BMP lipoprotein family. It in the C-terminal section; belongs to the G-protein coupled receptor 3 family. GABA-B receptor subfamily.

Its subcellular location is the membrane. This is Metabotropic glutamate receptor-like protein L (far1) from Dictyostelium discoideum (Social amoeba).